The chain runs to 113 residues: Cell cycle control protein 50C (113 aa).

Topologically, residues 1-34 (MEERAQHCLSRLLDNSALKQQELPIHRLYFTARR) are cytoplasmic. Residues 35-55 (VLFVFFATGIFCLCMGIILIL) form a helical membrane-spanning segment. The Extracellular segment spans residues 56 to 113 (SARSTQEIEINYTRICANCAKLRENASNFDKECTCSIPFYLSGKMMVGEIQETRLTLH). An N-linked (GlcNAc...) asparagine glycan is attached at N66.

The protein belongs to the CDC50/LEM3 family. As to expression, specifically expressed in testis.

The protein resides in the membrane. The sequence is that of Cell cycle control protein 50C from Homo sapiens (Human).